The sequence spans 295 residues: Ribosomal RNA small subunit methyltransferase A (295 aa).

Residues asparagine 29, leucine 31, glycine 56, glutamate 77, aspartate 102, and asparagine 128 each contribute to the S-adenosyl-L-methionine site.

It belongs to the class I-like SAM-binding methyltransferase superfamily. rRNA adenine N(6)-methyltransferase family. RsmA subfamily.

The protein localises to the cytoplasm. It catalyses the reaction adenosine(1518)/adenosine(1519) in 16S rRNA + 4 S-adenosyl-L-methionine = N(6)-dimethyladenosine(1518)/N(6)-dimethyladenosine(1519) in 16S rRNA + 4 S-adenosyl-L-homocysteine + 4 H(+). In terms of biological role, specifically dimethylates two adjacent adenosines (A1518 and A1519) in the loop of a conserved hairpin near the 3'-end of 16S rRNA in the 30S particle. May play a critical role in biogenesis of 30S subunits. In Listeria monocytogenes serotype 4b (strain CLIP80459), this protein is Ribosomal RNA small subunit methyltransferase A.